We begin with the raw amino-acid sequence, 114 residues long: NLP effector protein 1 (114 aa).

It belongs to the Necrosis inducing protein (NPP1) family.

It is found in the secreted. The protein resides in the host cytoplasm. Functionally, probable secreted effector that may act as a pathogen-associated molecular pattern (PAMP) recognized by the plant immune system. Seems not to induce necrosis, neither in several susceptible or resistant Vitis species nor in the dicot model plant Nicotiana benthamiana. The sequence is that of NLP effector protein 1 from Plasmopara viticola (Downy mildew of grapevine).